We begin with the raw amino-acid sequence, 185 residues long: NADH-dependent FMN reductase AsuE2 (185 aa).

A compositionally biased stretch (low complexity) spans 1-13 (MSTHTARRAGATA). Residues 1–24 (MSTHTARRAGATAGHDRDRGTEPG) are disordered. Residues 14–24 (GHDRDRGTEPG) show a composition bias toward basic and acidic residues.

The protein belongs to the non-flavoprotein flavin reductase family. In terms of assembly, does not interact with AsuE1, suggesting a possible transient interaction between the two enzymes instead of formation of a stable complex.

The enzyme catalyses FMNH2 + NAD(+) = FMN + NADH + 2 H(+). Its pathway is antibiotic biosynthesis. Its function is as follows. Involved in the biosynthesis of the antibiotic asukamycin. When flavin concentration is low, AsuE2 assists the protoasukamycin 4-monooxygenase AsuE1 by providing a reduced form of flavin, enhancing AsuE1 activity. The sequence is that of NADH-dependent FMN reductase AsuE2 from Streptomyces nodosus subsp. asukaensis.